A 466-amino-acid chain; its full sequence is Protein tilB homolog (466 aa).

LRR repeat units lie at residues 22-43 (SLEE…DKWC), 45-66 (DLKI…SKLK), 67-88 (KLEY…EGCE), and 89-110 (ELAK…KTLK). The LRRCT domain maps to 123–161 (NPCAFFDHYREFVVATLPQLKWLDGKGIEPSERIKALQE). The stretch at 178–204 (LKRAKLKEEAQRKHQEEDKNEDKRSNA) forms a coiled coil. Basic and acidic residues-rich tracts occupy residues 185–202 (EEAQ…DKRS) and 269–279 (EKQRKNQEKLS). Disordered stretches follow at residues 185–206 (EEAQ…NAGF) and 269–288 (EKQR…VKPP). One can recognise a CS domain in the interval 301–396 (VNEPKIDFSL…GGQRAFTSVK (96 aa)). Positions 418-466 (VDPSKHSFPDVTNIVQGKKHTPRRRPEPKIIPSEEDPTFEDNPEVPPLI) are disordered. Residues 450–460 (SEEDPTFEDNP) are compositionally biased toward acidic residues.

This sequence belongs to the tilB family. Interacts (via CS domain) with ZMYND10 (via C-terminus).

The protein localises to the cytoplasm. It is found in the cell projection. It localises to the cilium. May play a role in dynein arm assembly, hence essential for proper axoneme building for cilia motility. The protein is Protein tilB homolog (LRCC6) of Macaca fascicularis (Crab-eating macaque).